The following is a 457-amino-acid chain: tRNA-2-methylthio-N(6)-dimethylallyladenosine synthase (457 aa).

In terms of domain architecture, MTTase N-terminal spans 3-120; sequence KKVYIKTFGC…LPQMIDQRRA (118 aa). [4Fe-4S] cluster-binding residues include C12, C49, C83, C157, C161, and C164. The Radical SAM core domain occupies 143–377; sequence RVEGPSAFVS…QATIEENVAR (235 aa). Residues 380 to 447 form the TRAM domain; sequence RSMVGKVERI…PHSLRGELLL (68 aa).

Belongs to the methylthiotransferase family. MiaB subfamily. Monomer. The cofactor is [4Fe-4S] cluster.

The protein resides in the cytoplasm. It catalyses the reaction N(6)-dimethylallyladenosine(37) in tRNA + (sulfur carrier)-SH + AH2 + 2 S-adenosyl-L-methionine = 2-methylsulfanyl-N(6)-dimethylallyladenosine(37) in tRNA + (sulfur carrier)-H + 5'-deoxyadenosine + L-methionine + A + S-adenosyl-L-homocysteine + 2 H(+). Catalyzes the methylthiolation of N6-(dimethylallyl)adenosine (i(6)A), leading to the formation of 2-methylthio-N6-(dimethylallyl)adenosine (ms(2)i(6)A) at position 37 in tRNAs that read codons beginning with uridine. The chain is tRNA-2-methylthio-N(6)-dimethylallyladenosine synthase from Burkholderia ambifaria (strain MC40-6).